The chain runs to 540 residues: T-complex protein 1 subunit delta (540 aa).

The span at 1 to 12 shows a compositional bias: low complexity; that stretch reads MPPAVPAAAATA. The segment at 1–32 is disordered; it reads MPPAVPAAAATARQSASGRERNFKDKDKPESV. Basic and acidic residues predominate over residues 18-31; the sequence is GRERNFKDKDKPES.

It belongs to the TCP-1 chaperonin family. As to quaternary structure, heterooligomeric complex of about 850 to 900 kDa that forms two stacked rings, 12 to 16 nm in diameter.

The protein resides in the cytoplasm. Molecular chaperone; assists the folding of proteins upon ATP hydrolysis. Known to play a role, in vitro, in the folding of actin and tubulin. The sequence is that of T-complex protein 1 subunit delta (cct-4) from Caenorhabditis elegans.